The sequence spans 640 residues: 1-deoxy-D-xylulose-5-phosphate synthase (640 aa).

Thiamine diphosphate-binding positions include His79 and Ala120 to Ser122. A Mg(2+)-binding site is contributed by Asp151. Thiamine diphosphate contacts are provided by residues Gly152 to Ala153, Asn180, Tyr289, and Glu371. Mg(2+) is bound at residue Asn180.

Belongs to the transketolase family. DXPS subfamily. In terms of assembly, homodimer. Mg(2+) serves as cofactor. It depends on thiamine diphosphate as a cofactor.

It catalyses the reaction D-glyceraldehyde 3-phosphate + pyruvate + H(+) = 1-deoxy-D-xylulose 5-phosphate + CO2. Its pathway is metabolic intermediate biosynthesis; 1-deoxy-D-xylulose 5-phosphate biosynthesis; 1-deoxy-D-xylulose 5-phosphate from D-glyceraldehyde 3-phosphate and pyruvate: step 1/1. Functionally, catalyzes the acyloin condensation reaction between C atoms 2 and 3 of pyruvate and glyceraldehyde 3-phosphate to yield 1-deoxy-D-xylulose-5-phosphate (DXP). The sequence is that of 1-deoxy-D-xylulose-5-phosphate synthase from Erythrobacter litoralis (strain HTCC2594).